Here is an 852-residue protein sequence, read N- to C-terminus: Chitin synthase 1 (852 aa).

Disordered regions lie at residues 27–46 and 53–97; these read EDQD…TNYA and SSLR…QANG. The span at 53–74 shows a compositional bias: polar residues; that stretch reads SSLRSQKSANKPTTAQNRNSAA. 7 consecutive transmembrane segments (helical) span residues 492–509, 532–552, 572–592, 601–621, 686–706, 787–807, and 830–850; these read RWLN…IHFR, VISL…FYFI, IFDF…ICSM, FLFM…LFCS, FLPY…YAFC, THLV…ITTS, and CGLG…GIFT.

This sequence belongs to the chitin synthase family. Class II subfamily.

Its subcellular location is the cell membrane. It carries out the reaction [(1-&gt;4)-N-acetyl-beta-D-glucosaminyl](n) + UDP-N-acetyl-alpha-D-glucosamine = [(1-&gt;4)-N-acetyl-beta-D-glucosaminyl](n+1) + UDP + H(+). Its function is as follows. Polymerizes chitin, a structural polymer of the cell wall and septum, by transferring the sugar moiety of UDP-GlcNAc to the non-reducing end of the growing chitin polymer. The sequence is that of Chitin synthase 1 (CHS1) from Mucor circinelloides f. lusitanicus (Mucor racemosus var. lusitanicus).